The sequence spans 96 residues: Putative antiholin (96 aa).

Residues 1–4 (MIEM) lie on the Periplasmic side of the membrane. Cytoplasmic-facing segments span residues 1–32 (MIEM…KKTE) and 26–29 (QAIK). Residues 5–25 (EFGKELLVYMTFLVVVTPVFV) traverse the membrane as a helical segment. Residues 33–55 (LVPSKWLPTVSILIGAILGALAT) traverse the membrane as a helical segment. Topologically, residues 56–60 (FLDGS) are periplasmic. A helical transmembrane segment spans residues 61–81 (GSLATMIWAGALAGAGGTGLF). Residues 82 to 96 (EQFTNRSKKYGEDDK) lie on the Cytoplasmic side of the membrane.

Homomultimer. Interacts with isoform Antiholin; this interaction blocks the holin homomultimerization and delays host cell lysis.

It localises to the host cell inner membrane. Accumulates harmlessly in the cytoplasmic membrane until it reaches a critical concentration that triggers the formation of micron-scale pores (holes) causing host cell membrane disruption and endolysin escape into the periplasmic space. Determines the precise timing of host cell lysis. Participates with the endolysin and spanin proteins in the sequential events which lead to the programmed host cell lysis releasing the mature viral particles from the host cell. Functionally, isoform Antiholin: Counteracts the aggregation of the holin molecules and thus of pore formation. This chain is Putative antiholin (hol), found in Listeria monocytogenes (Bacteriophage A118).